A 174-amino-acid chain; its full sequence is Actin-related protein 2/3 complex subunit 3 (174 aa).

Belongs to the ARPC3 family. Component of the Arp2/3 complex composed of arp2, act2, arc1/p41-ARC, arc2/p34-ARC, arc3/p21-ARC, arc4/p20-ARC and arc5/p16-ARC.

It localises to the cytoplasm. Its subcellular location is the cytoskeleton. It is found in the actin patch. Its function is as follows. Functions as a component of the Arp2/3 complex which is involved in regulation of actin polymerization and together with an activating nucleation-promoting factor (NPF) mediates the formation of branched actin networks. In Schizosaccharomyces pombe (strain 972 / ATCC 24843) (Fission yeast), this protein is Actin-related protein 2/3 complex subunit 3 (arc3).